A 426-amino-acid polypeptide reads, in one-letter code: Gamma-glutamyl phosphate reductase (426 aa).

It belongs to the gamma-glutamyl phosphate reductase family.

Its subcellular location is the cytoplasm. It carries out the reaction L-glutamate 5-semialdehyde + phosphate + NADP(+) = L-glutamyl 5-phosphate + NADPH + H(+). Its pathway is amino-acid biosynthesis; L-proline biosynthesis; L-glutamate 5-semialdehyde from L-glutamate: step 2/2. In terms of biological role, catalyzes the NADPH-dependent reduction of L-glutamate 5-phosphate into L-glutamate 5-semialdehyde and phosphate. The product spontaneously undergoes cyclization to form 1-pyrroline-5-carboxylate. The polypeptide is Gamma-glutamyl phosphate reductase (Paracidovorax citrulli (strain AAC00-1) (Acidovorax citrulli)).